A 732-amino-acid polypeptide reads, in one-letter code: MIINKAIDLGKGKILSIETGKMAKQADGAALVRLGDTMVLATVVSSKTPPPANQDYFPLQVEYREKYSAAGKFPGGFFKREGRPSEKEILTARLIDRALRPLFPDGYLFETQIIVTVFSSDQINDADVLGGVAASAAIMVSDIPFHNSMSEVRVGRINGEFIVNPNINELQGSDIDICIGGTANTICMLEGEMKEISEAEMLDAIKFGHEAIRKICALQDEMAAEIARPQRSFAPVKAPAKLKEVIAGLSETRLKELAYTPLCKEDRAEKTASVYKETLQSTLELFKALLTPEEIAAEPEKALCLNAHIIEEEIHAVEKKVMRHMILDDGKRLDGRTLDEIRPISIELGIIPRAHGSALFTRGETQALVTITLGTKKDAQSVDTLTDSADKRFMLHYNFPPFSVGETGRVGGTGRREIGHGNLAERSIKMVSPSETDFPYTIRIVSDILESNGSSSMASVCGGTLALMDGGVPIRKPVSGIAMGLIKEGDAYSVLSDILGNEDHLGDMDFKVAGTEDGITACQMDIKIDGLDYHILETALEQARKGRLHILDKMEVAIPISRGELAQYAPRLTSIQIPVDAIGLIIGKGGETIRSITEETGAEINIEDDGTVTIACSSPEGTNAAVETIKTLISKPEIGNTYLGKVRDIRDELGAFVEFLPKTDGLVHISEISKERVTKVSDHLKVGDRVKVKLVDIRKDPRTGKNRFALSIKAVESEPEKSDENKAGTEGN.

Positions 503 and 509 each coordinate Mg(2+). The 60-residue stretch at 570 to 629 folds into the KH domain; that stretch reads PRLTSIQIPVDAIGLIIGKGGETIRSITEETGAEINIEDDGTVTIACSSPEGTNAAVETI. The 75-residue stretch at 639 to 713 folds into the S1 motif domain; that stretch reads GNTYLGKVRD…GKNRFALSIK (75 aa). Residues 710-732 form a disordered region; the sequence is LSIKAVESEPEKSDENKAGTEGN. The span at 715 to 732 shows a compositional bias: basic and acidic residues; sequence VESEPEKSDENKAGTEGN.

Belongs to the polyribonucleotide nucleotidyltransferase family. Mg(2+) is required as a cofactor.

The protein localises to the cytoplasm. The enzyme catalyses RNA(n+1) + phosphate = RNA(n) + a ribonucleoside 5'-diphosphate. Involved in mRNA degradation. Catalyzes the phosphorolysis of single-stranded polyribonucleotides processively in the 3'- to 5'-direction. In Chlorobium phaeobacteroides (strain DSM 266 / SMG 266 / 2430), this protein is Polyribonucleotide nucleotidyltransferase.